A 512-amino-acid polypeptide reads, in one-letter code: 2-isopropylmalate synthase (512 aa).

Positions 5 to 267 constitute a Pyruvate carboxyltransferase domain; it reads VVIFDTTLRD…ETSINKSEIY (263 aa). Residues D14, H202, H204, and N238 each coordinate Mn(2+). Residues 391–512 form a regulatory domain region; the sequence is SLEYLHITSG…LPKAKTERAV (122 aa).

The protein belongs to the alpha-IPM synthase/homocitrate synthase family. LeuA type 1 subfamily. In terms of assembly, homodimer. Mn(2+) is required as a cofactor.

The protein resides in the cytoplasm. The enzyme catalyses 3-methyl-2-oxobutanoate + acetyl-CoA + H2O = (2S)-2-isopropylmalate + CoA + H(+). It functions in the pathway amino-acid biosynthesis; L-leucine biosynthesis; L-leucine from 3-methyl-2-oxobutanoate: step 1/4. Functionally, catalyzes the condensation of the acetyl group of acetyl-CoA with 3-methyl-2-oxobutanoate (2-ketoisovalerate) to form 3-carboxy-3-hydroxy-4-methylpentanoate (2-isopropylmalate). The chain is 2-isopropylmalate synthase from Heliobacterium modesticaldum (strain ATCC 51547 / Ice1).